The sequence spans 232 residues: 7-cyano-7-deazaguanine synthase (232 aa).

ATP is bound at residue 8-18 (FSGGQDSTTCL). Residues C189, C198, C201, and C204 each coordinate Zn(2+).

The protein belongs to the QueC family. Zn(2+) serves as cofactor.

It catalyses the reaction 7-carboxy-7-deazaguanine + NH4(+) + ATP = 7-cyano-7-deazaguanine + ADP + phosphate + H2O + H(+). It functions in the pathway purine metabolism; 7-cyano-7-deazaguanine biosynthesis. In terms of biological role, catalyzes the ATP-dependent conversion of 7-carboxy-7-deazaguanine (CDG) to 7-cyano-7-deazaguanine (preQ(0)). The sequence is that of 7-cyano-7-deazaguanine synthase from Serratia proteamaculans (strain 568).